Consider the following 433-residue polypeptide: uncharacterized protein (433 aa).

It localises to the virion. This is an uncharacterized protein from Acanthamoeba polyphaga (Amoeba).